The chain runs to 133 residues: Large-conductance mechanosensitive channel (133 aa).

Transmembrane regions (helical) follow at residues 10-30 and 76-96; these read FAVKGNVMDMAVGVIIGGAFG and GAFIQNIFDFLIIAIAVFSMV.

It belongs to the MscL family. In terms of assembly, homopentamer.

The protein resides in the cell inner membrane. In terms of biological role, channel that opens in response to stretch forces in the membrane lipid bilayer. May participate in the regulation of osmotic pressure changes within the cell. This Haemophilus ducreyi (strain 35000HP / ATCC 700724) protein is Large-conductance mechanosensitive channel.